The primary structure comprises 684 residues: DNA-directed RNA polymerase subunit beta' (684 aa).

Zn(2+)-binding residues include C69, C71, C87, and C90. Residues D489, D491, and D493 each coordinate Mg(2+).

This sequence belongs to the RNA polymerase beta' chain family. RpoC1 subfamily. In terms of assembly, in plastids the minimal PEP RNA polymerase catalytic core is composed of four subunits: alpha, beta, beta', and beta''. When a (nuclear-encoded) sigma factor is associated with the core the holoenzyme is formed, which can initiate transcription. Requires Mg(2+) as cofactor. Zn(2+) serves as cofactor.

It is found in the plastid. It localises to the chloroplast. It carries out the reaction RNA(n) + a ribonucleoside 5'-triphosphate = RNA(n+1) + diphosphate. DNA-dependent RNA polymerase catalyzes the transcription of DNA into RNA using the four ribonucleoside triphosphates as substrates. In Morus indica (Mulberry), this protein is DNA-directed RNA polymerase subunit beta'.